The chain runs to 89 residues: UPF0223 protein Bcer98_2663 (89 aa).

It belongs to the UPF0223 family.

The chain is UPF0223 protein Bcer98_2663 from Bacillus cytotoxicus (strain DSM 22905 / CIP 110041 / 391-98 / NVH 391-98).